The sequence spans 483 residues: Glutamyl-tRNA(Gln) amidotransferase subunit A (483 aa).

Catalysis depends on charge relay system residues Lys-77 and Ser-152. Ser-176 functions as the Acyl-ester intermediate in the catalytic mechanism.

This sequence belongs to the amidase family. GatA subfamily. Heterotrimer of A, B and C subunits.

The catalysed reaction is L-glutamyl-tRNA(Gln) + L-glutamine + ATP + H2O = L-glutaminyl-tRNA(Gln) + L-glutamate + ADP + phosphate + H(+). In terms of biological role, allows the formation of correctly charged Gln-tRNA(Gln) through the transamidation of misacylated Glu-tRNA(Gln) in organisms which lack glutaminyl-tRNA synthetase. The reaction takes place in the presence of glutamine and ATP through an activated gamma-phospho-Glu-tRNA(Gln). The protein is Glutamyl-tRNA(Gln) amidotransferase subunit A of Listeria innocua serovar 6a (strain ATCC BAA-680 / CLIP 11262).